A 256-amino-acid chain; its full sequence is Nuclear shuttle protein (256 aa).

The Bipartite nuclear localization signal motif lies at 21–42 (NYGFKRTFVVKRGDAKRRQTQV). The short motif at 81 to 96 (QLCKTQPNRSRSYIKL) is the Nuclear localization signal element. The tract at residues 150-187 (ELFGARIHSLGNLAVTPALKERFYILHVLKRVISVEKD) is interaction with Arabidopsis thaliana NSI protein.

The protein belongs to the begomovirus nuclear shuttle protein family. In terms of assembly, binds to single-stranded and double-stranded viral DNA. Interacts with the host nuclear shuttle interacting (NSI) protein. This interaction may allow NSP to recruit NSI monomers to the viral genome and thus regulate nuclear export of viral genome by NSP.

The protein resides in the host nucleus. It is found in the host cytoplasm. The protein localises to the host cell membrane. Binds to the genomic viral ssDNA, shuttles it into and out of the cell nucleus. Begomoviruses use 2 proteins to transport their DNA from cell to cell. The nuclear shuttle protein (NSP) shuttles it between nucleus and cytoplasm and the movement protein (MP) probably transports the DNA-NSP complex to the cell periphery and facilitates movement across the cell wall. This Pepper huasteco yellow vein virus (PHYVV) protein is Nuclear shuttle protein.